A 410-amino-acid polypeptide reads, in one-letter code: Peptidase T (410 aa).

The segment at 11–30 (RYAEIDTQSDPDSESTPSTE) is disordered. His78 contacts Zn(2+). Residue Asp80 is part of the active site. A Zn(2+)-binding site is contributed by Asp140. The active-site Proton acceptor is the Glu174. The Zn(2+) site is built by Glu175, Asp197, and His379.

This sequence belongs to the peptidase M20B family. It depends on Zn(2+) as a cofactor.

The protein localises to the cytoplasm. It carries out the reaction Release of the N-terminal residue from a tripeptide.. Cleaves the N-terminal amino acid of tripeptides. This Staphylococcus carnosus (strain TM300) protein is Peptidase T.